The primary structure comprises 463 residues: RuvB-like 2 (463 aa).

A2 carries the N-acetylalanine modification. K9 is covalently cross-linked (Glycyl lysine isopeptide (Lys-Gly) (interchain with G-Cter in SUMO2)). 77 to 84 (GQPGTGKT) contacts ATP. S437 is subject to Phosphoserine. Glycyl lysine isopeptide (Lys-Gly) (interchain with G-Cter in SUMO2) cross-links involve residues K444 and K456.

The protein belongs to the RuvB family. Forms homohexameric rings. Can form a dodecamer with RUVBL1 made of two stacked hexameric rings; however, even though RUVBL1 and RUVBL2 are present in equimolar ratio, the oligomeric status of each hexamer is not known. Oligomerization may regulate binding to nucleic acids and conversely, binding to nucleic acids may affect the dodecameric assembly. Interaction of the complex with DHX34 results in conformational changes of the N-terminus of the RUVBL2 subunits, resulting in loss of nucleotide binding ability and ATP hydrolysis of the complex. Interacts with the transcriptional activation domain of MYC. Interacts with ATF2. Component of the RNA polymerase II holoenzyme complex. May also act to bridge the LEF1/TCF1-CTNNB1 complex and TBP. Component of the NuA4 histone acetyltransferase complex which contains the catalytic subunit KAT5/TIP60 and the subunits EP400, TRRAP/PAF400, BRD8/SMAP, EPC1, DMAP1/DNMAP1, RUVBL1/TIP49, RUVBL2, ING3, actin, ACTL6A/BAF53A, MORF4L1/MRG15, MORF4L2/MRGX, MRGBP, YEATS4/GAS41, VPS72/YL1 and MEAF6. The NuA4 complex interacts with MYC and the adenovirus E1A protein. RUVBL2 interacts with EP400. Component of a NuA4-related complex which contains EP400, TRRAP/PAF400, SRCAP, BRD8/SMAP, EPC1, DMAP1/DNMAP1, RUVBL1/TIP49, RUVBL2, actin, ACTL6A/BAF53A, VPS72 and YEATS4/GAS41. Interacts with NPAT. Component of the chromatin-remodeling INO80 complex; specifically part of a complex module associated with the helicase ATP-binding and the helicase C-terminal domain of INO80. Component of some MLL1/MLL complex, at least composed of the core components KMT2A/MLL1, ASH2L, HCFC1/HCF1, WDR5 and RBBP5, as well as the facultative components BACC1, CHD8, E2F6, HSP70, INO80C, KANSL1, LAS1L, MAX, MCRS1, MGA, MYST1/MOF, PELP1, PHF20, PRP31, RING2, RUVB1/TIP49A, RUVB2/TIP49B, SENP3, TAF1, TAF4, TAF6, TAF7, TAF9 and TEX10. Interacts with IGHMBP2. Interacts with TELO2. Interacts with HINT1. Component of a SWR1-like complex. Component of the R2TP complex composed at least of RUVBL1, RUVBL2, RPAP3 and PIHD1. Component of the PAQosome complex which is responsible for the biogenesis of several protein complexes and which consists of R2TP complex members RUVBL1, RUVBL2, RPAP3 and PIH1D1, URI complex members PFDN2, PFDN6, PDRG1, UXT and URI1 as well as ASDURF, POLR2E and DNAAF10/WDR92. Interacts with ITFG1. Interacts with ZMYND10. Interacts with WAC; WAC positively regulates MTOR activity by promoting the assembly of the TTT complex composed of TELO2, TTI1 and TTI2 and the RUVBL complex composed of RUVBL1 and RUVBL2 into the TTT-RUVBL complex which leads to the dimerization of the mTORC1 complex and its subsequent activation. Forms a complex with APPL1 and APPL2. Interacts with ZNHIT2 (via HIT-type zinc finger) in the presence of ATP or ADP; shows a stronger interaction in the presence of ADP. The RUVBL1/RUVBL2 complex interacts with ZNHIT1 (via HIT-type zinc finger), ZNHIT3 (via HIT-type zinc finger), ZNHIT6 (via HIT-type zinc finger) and DDX59/ZNHIT5 (via HIT-type zinc finger) in the presence of ADP. Interacts with NOPCHAP1; the interaction is direct and disrupted upon ATP binding. Interacts with SMG1.

It localises to the nucleus matrix. The protein resides in the nucleus. The protein localises to the nucleoplasm. It is found in the cytoplasm. Its subcellular location is the membrane. It localises to the dynein axonemal particle. It carries out the reaction ATP + H2O = ADP + phosphate + H(+). Its function is as follows. Possesses single-stranded DNA-stimulated ATPase and ATP-dependent DNA helicase (5' to 3') activity; hexamerization is thought to be critical for ATP hydrolysis and adjacent subunits in the ring-like structure contribute to the ATPase activity. Component of the NuA4 histone acetyltransferase complex which is involved in transcriptional activation of select genes principally by acetylation of nucleosomal histones H4 and H2A. This modification may both alter nucleosome-DNA interactions and promote interaction of the modified histones with other proteins which positively regulate transcription. This complex may be required for the activation of transcriptional programs associated with oncogene and proto-oncogene mediated growth induction, tumor suppressor mediated growth arrest and replicative senescence, apoptosis, and DNA repair. The NuA4 complex ATPase and helicase activities seem to be, at least in part, contributed by the association of RUVBL1 and RUVBL2 with EP400. NuA4 may also play a direct role in DNA repair when recruited to sites of DNA damage. Component of a SWR1-like complex that specifically mediates the removal of histone H2A.Z/H2AZ1 from the nucleosome. Proposed core component of the chromatin remodeling INO80 complex which exhibits DNA- and nucleosome-activated ATPase activity and catalyzes ATP-dependent nucleosome sliding. Plays an essential role in oncogenic transformation by MYC and also modulates transcriptional activation by the LEF1/TCF1-CTNNB1 complex. May also inhibit the transcriptional activity of ATF2. Involved in the endoplasmic reticulum (ER)-associated degradation (ERAD) pathway where it negatively regulates expression of ER stress response genes. May play a role in regulating the composition of the U5 snRNP complex. The sequence is that of RuvB-like 2 (Ruvbl2) from Mus musculus (Mouse).